Here is a 372-residue protein sequence, read N- to C-terminus: Ciliary neurotrophic factor receptor subunit alpha (372 aa).

The N-terminal stretch at 1-22 (MAASVPWACCAVLAAAAAAVYT) is a signal peptide. The Ig-like C2-type domain maps to 27-104 (PQEAPHVQYE…WHLRHQVLLH (78 aa)). A disulfide bridge links Cys-46 with Cys-89. 4 N-linked (GlcNAc...) asparagine glycosylation sites follow: Asn-60, Asn-70, Asn-142, and Asn-190. Fibronectin type-III domains follow at residues 108 to 205 (PPRE…VKPD) and 206 to 306 (PPEN…TEEP). The WSXWS motif motif lies at 290 to 294 (WSDWS). The interval 301–338 (PWTEEPRHLTTEAQAPETTTSTTSSLAPPPTTKICDPG) is disordered. A compositionally biased stretch (low complexity) spans 311–326 (TEAQAPETTTSTTSSL). Ser-342 carries the GPI-anchor amidated serine lipid modification. Positions 343–372 (GGGPSILFLTSVPVTLVLAAAAATANNLLI) are cleaved as a propeptide — removed in mature form.

The protein belongs to the type I cytokine receptor family. Type 3 subfamily. In terms of assembly, forms a heterotrimer with LIFR and IL6ST. Interacts with heterodimeric neurotropic cytokine composed of CLCF1/CLC and CRLF1/CLF-1. Either alone or in complex with the heterodimer CLCF1-CRLF1 interacts with SORL1; this interaction may promote internalization and lysosomal degradation.

It is found in the cell membrane. In terms of biological role, binds to CNTF. The alpha subunit provides the receptor specificity. This Mus musculus (Mouse) protein is Ciliary neurotrophic factor receptor subunit alpha (Cntfr).